The sequence spans 557 residues: Formate--tetrahydrofolate ligase (557 aa).

ATP is bound at residue 67-74 (TPAGEGKS).

It belongs to the formate--tetrahydrofolate ligase family.

It catalyses the reaction (6S)-5,6,7,8-tetrahydrofolate + formate + ATP = (6R)-10-formyltetrahydrofolate + ADP + phosphate. It participates in one-carbon metabolism; tetrahydrofolate interconversion. The chain is Formate--tetrahydrofolate ligase from Lacticaseibacillus paracasei (strain ATCC 334 / BCRC 17002 / CCUG 31169 / CIP 107868 / KCTC 3260 / NRRL B-441) (Lactobacillus paracasei).